Reading from the N-terminus, the 300-residue chain is Ribosomal RNA small subunit methyltransferase H (300 aa).

S-adenosyl-L-methionine-binding positions include 46 to 48, D65, F92, D107, and Q114; that span reads GGH.

This sequence belongs to the methyltransferase superfamily. RsmH family.

It is found in the cytoplasm. The enzyme catalyses cytidine(1402) in 16S rRNA + S-adenosyl-L-methionine = N(4)-methylcytidine(1402) in 16S rRNA + S-adenosyl-L-homocysteine + H(+). Functionally, specifically methylates the N4 position of cytidine in position 1402 (C1402) of 16S rRNA. The chain is Ribosomal RNA small subunit methyltransferase H from Prochlorococcus marinus (strain MIT 9312).